We begin with the raw amino-acid sequence, 172 residues long: Large ribosomal subunit protein uL10 (172 aa).

This sequence belongs to the universal ribosomal protein uL10 family. In terms of assembly, part of the ribosomal stalk of the 50S ribosomal subunit. The N-terminus interacts with L11 and the large rRNA to form the base of the stalk. The C-terminus forms an elongated spine to which L12 dimers bind in a sequential fashion forming a multimeric L10(L12)X complex.

Forms part of the ribosomal stalk, playing a central role in the interaction of the ribosome with GTP-bound translation factors. The protein is Large ribosomal subunit protein uL10 of Syntrophotalea carbinolica (strain DSM 2380 / NBRC 103641 / GraBd1) (Pelobacter carbinolicus).